The following is a 72-amino-acid chain: uncharacterized protein (72 aa).

The disordered stretch occupies residues 15–62; sequence NNNYNNNNNNNNNNNNNNNNNNNNNNNNNNININNNNNNNNNNNNNNN.

This is an uncharacterized protein from Dictyostelium discoideum (Social amoeba).